Here is a 500-residue protein sequence, read N- to C-terminus: Galactose/methyl galactoside import ATP-binding protein MglA (500 aa).

ABC transporter domains follow at residues 8–243 (LEME…VGRD) and 257–500 (EMIL…AKYL). An ATP-binding site is contributed by 40-47 (GENGAGKS).

The protein belongs to the ABC transporter superfamily. Galactose/methyl galactoside importer (TC 3.A.1.2.3) family. As to quaternary structure, the complex is composed of one ATP-binding protein (MglA), two transmembrane proteins (MglC) and a solute-binding protein (MglB).

The protein resides in the cell inner membrane. It carries out the reaction D-galactose(out) + ATP + H2O = D-galactose(in) + ADP + phosphate + H(+). The enzyme catalyses methyl beta-D-galactoside(out) + ATP + H2O = methyl beta-D-galactoside(in) + ADP + phosphate + H(+). Part of the ABC transporter complex MglABC involved in galactose/methyl galactoside import. Responsible for energy coupling to the transport system. This is Galactose/methyl galactoside import ATP-binding protein MglA from Fusobacterium nucleatum subsp. nucleatum (strain ATCC 25586 / DSM 15643 / BCRC 10681 / CIP 101130 / JCM 8532 / KCTC 2640 / LMG 13131 / VPI 4355).